The chain runs to 73 residues: Beta-defensin 50 (73 aa).

The N-terminal stretch at 1–23 is a signal peptide; sequence MKTLCFLLLTSGLLYLMVKGVGS. Disulfide bonds link Cys34-Cys63 and Cys46-Cys64.

Belongs to the beta-defensin family. Highly expressed in prostate. Not expressed in uterus, epididymis, ovary, testis, spleen, submaxillary gland, thymus, thyroid, pancreas, smooth muscle, skeletal muscle, heart, kidney, lung, liver, eye and brain.

Its subcellular location is the secreted. Has bactericidal activity. This chain is Beta-defensin 50 (Defb50), found in Mus musculus (Mouse).